The following is a 301-amino-acid chain: MKIAVLSRNPRLYSTRRLVEAGIERGHEMVVIDTLRAYMNIASHKPQIHYRGKPLEGFDAVIPRIGASVTFYGCAVLRQFEMMGVFPLNESVAIARSRDKLRSLQLLSRRGIGLPVTGFAHSPDDIPDLIQMVNGAPLVIKVLEGTQGIGVVLCETATAAESVIEAFMGLKQDIMVQEYIKEAGGADIRCFVVGDKVIASMKRQAKPGEFRSNLHRGGSASLIKITPEERMTALRAAKVMGLSVAGVDILRSNHGPLVMEVNSSPGLEGIEVTTSKDVAGMIIGYLEKNSGPHMTRTKGKG.

In terms of domain architecture, ATP-grasp spans 104-287 (LQLLSRRGIG…VAGMIIGYLE (184 aa)). ATP contacts are provided by residues Lys141, 178 to 179 (EY), Asp187, and 211 to 213 (RSN). The Mg(2+) site is built by Asp248, Glu260, and Asn262. Mn(2+) is bound by residues Asp248, Glu260, and Asn262.

It belongs to the RimK family. The cofactor is Mg(2+). Mn(2+) is required as a cofactor.

In Pseudomonas syringae pv. syringae (strain B728a), this protein is Probable alpha-L-glutamate ligase.